A 105-amino-acid polypeptide reads, in one-letter code: Malonate decarboxylase acyl carrier protein (105 aa).

S28 carries the O-(phosphoribosyl dephospho-coenzyme A)serine modification.

Belongs to the MdcC family. Post-translationally, covalently binds the prosthetic group of malonate decarboxylase.

The protein localises to the cytoplasm. Subunit of malonate decarboxylase, it is an acyl carrier protein to which acetyl and malonyl thioester residues are bound via a 2'-(5''-phosphoribosyl)-3'-dephospho-CoA prosthetic group and turn over during the catalytic mechanism. In Xanthomonas campestris pv. campestris (strain 8004), this protein is Malonate decarboxylase acyl carrier protein.